A 314-amino-acid chain; its full sequence is Oxidoreductase poxI (314 aa).

It belongs to the NmrA-type oxidoreductase family. Isoflavone reductase subfamily.

It participates in secondary metabolite biosynthesis. Oxidoreductase; part of the gene cluster that mediates the biosynthesis of oxaleimides, cytotoxic compounds containing an unusual disubstituted succinimide moiety. The first step of the pathway is provided by the HR-PKS poxF that serves in a new mode of collaborative biosynthesis with the PKS-NRPS poxE, by providing the olefin containing amino acid substrate via the synthesis of an ACP-bound dec-4-enoate. The cytochrome P450 monooxygenase poxM-catalyzed oxidation at the alpha-position creates the enzyme-bound 2-hydroxydec-4-enoyl-ACP thioester, which may be prone to spontaneous hydrolysis to yield 2-hydroxydec-4-enoic acid due to increased electrophilicity of the carbonyl. 2-hydroxydec-4-enoic acid can then be further oxidized by poxM to yield the alpha-ketoacid 2-oxodec-4-enoicacid, which is reductively aminated by the aminotransferase poxL to yield (S,E)-2-aminodec-4-enoic acid. The Hybrid PKS-NRPS synthetase poxE then performs condensation between the octaketide product of its PKS modules and the amino group of (S,E)-2-aminodec-4-enoic acid which is activated and incorporated by the adenylation domain. The resulting aminoacyl product can be cyclized by the Diels-Alderase PoxQ and reductively released by the reductive (R) domain of poxE to yield an aldehyde intermediate. The released aldehyde is then substrate for a Knoevenagel condensation by the hydrolyase poxO followed by an oxidation at the 5-position of the pyrrolidone ring. The presence of the olefin from the amino acid building block allows for migration of the substituted allyl group to occur. This allylic transposition reaction takes place in a conjugate addition, semipinacol-like fashion to yield a succinimide intermediate. Iterative two-electron oxidations of the C7 methyl of the succinimide intermediate to the carboxylic acid can be catalyzed by one of two remaining cytochrome P450 monooxygenasess poxC or poxD to yield oxaleimide A. Subsequent oxidation yields the maleimide scaffold oxaleimide I. Both oxaleimide A and oxaleimide I can undergo oxidative modifications in the decalin ring to yield the series of products oxaleimides B to H. This chain is Oxidoreductase poxI, found in Penicillium oxalicum (strain 114-2 / CGMCC 5302) (Penicillium decumbens).